The sequence spans 219 residues: Large ribosomal subunit protein bL25 (219 aa).

The disordered stretch occupies residues 193 to 219 (VSSTELEETPEVPASAVPTTDQGESAE). Residues 209–219 (VPTTDQGESAE) are compositionally biased toward polar residues.

This sequence belongs to the bacterial ribosomal protein bL25 family. CTC subfamily. In terms of assembly, part of the 50S ribosomal subunit; part of the 5S rRNA/L5/L18/L25 subcomplex. Contacts the 5S rRNA. Binds to the 5S rRNA independently of L5 and L18.

Functionally, this is one of the proteins that binds to the 5S RNA in the ribosome where it forms part of the central protuberance. The protein is Large ribosomal subunit protein bL25 of Legionella pneumophila (strain Corby).